The following is a 139-amino-acid chain: uncharacterized protein (139 aa).

The next 3 membrane-spanning stretches (helical) occupy residues 19–39 (CIIF…FILG), 64–84 (IFNV…FNLF), and 89–109 (AITI…WILG).

It is found in the cell membrane. This is an uncharacterized protein from Methanocaldococcus jannaschii (strain ATCC 43067 / DSM 2661 / JAL-1 / JCM 10045 / NBRC 100440) (Methanococcus jannaschii).